The chain runs to 507 residues: ATP synthase subunit alpha, chloroplastic (507 aa).

170–177 contacts ATP; the sequence is GDRQTGKT.

This sequence belongs to the ATPase alpha/beta chains family. As to quaternary structure, F-type ATPases have 2 components, CF(1) - the catalytic core - and CF(0) - the membrane proton channel. CF(1) has five subunits: alpha(3), beta(3), gamma(1), delta(1), epsilon(1). CF(0) has four main subunits: a, b, b' and c.

It localises to the plastid. The protein localises to the chloroplast thylakoid membrane. The catalysed reaction is ATP + H2O + 4 H(+)(in) = ADP + phosphate + 5 H(+)(out). Its function is as follows. Produces ATP from ADP in the presence of a proton gradient across the membrane. The alpha chain is a regulatory subunit. This chain is ATP synthase subunit alpha, chloroplastic, found in Buxus microphylla (Littleleaf boxwood).